The sequence spans 557 residues: Dihydroxy-acid dehydratase (557 aa).

C50 serves as a coordination point for [2Fe-2S] cluster. Position 82 (D82) interacts with Mg(2+). [2Fe-2S] cluster is bound at residue C123. Mg(2+) is bound by residues D124 and K125. K125 carries the N6-carboxylysine modification. C195 provides a ligand contact to [2Fe-2S] cluster. E447 contributes to the Mg(2+) binding site. S473 serves as the catalytic Proton acceptor.

Belongs to the IlvD/Edd family. In terms of assembly, homodimer. It depends on [2Fe-2S] cluster as a cofactor. The cofactor is Mg(2+).

The catalysed reaction is (2R)-2,3-dihydroxy-3-methylbutanoate = 3-methyl-2-oxobutanoate + H2O. It carries out the reaction (2R,3R)-2,3-dihydroxy-3-methylpentanoate = (S)-3-methyl-2-oxopentanoate + H2O. It participates in amino-acid biosynthesis; L-isoleucine biosynthesis; L-isoleucine from 2-oxobutanoate: step 3/4. Its pathway is amino-acid biosynthesis; L-valine biosynthesis; L-valine from pyruvate: step 3/4. Functionally, functions in the biosynthesis of branched-chain amino acids. Catalyzes the dehydration of (2R,3R)-2,3-dihydroxy-3-methylpentanoate (2,3-dihydroxy-3-methylvalerate) into 2-oxo-3-methylpentanoate (2-oxo-3-methylvalerate) and of (2R)-2,3-dihydroxy-3-methylbutanoate (2,3-dihydroxyisovalerate) into 2-oxo-3-methylbutanoate (2-oxoisovalerate), the penultimate precursor to L-isoleucine and L-valine, respectively. The protein is Dihydroxy-acid dehydratase of Burkholderia thailandensis (strain ATCC 700388 / DSM 13276 / CCUG 48851 / CIP 106301 / E264).